Reading from the N-terminus, the 290-residue chain is Type II secretion system protein C (290 aa).

The Cytoplasmic portion of the chain corresponds to 1 to 28 (MTLPFRDDLLSSLLARCKTVPLSRFSQP). The chain crosses the membrane as a helical span at residues 29–46 (LFWLLLLLLAHQCAGLTW). At 47-290 (RLLDLGSQQS…LYDVYVGLSE (244 aa)) the chain is on the periplasmic side.

This sequence belongs to the GSP C family.

The protein localises to the cell inner membrane. Its function is as follows. Involved in a type II secretion system (T2SS, formerly general secretion pathway, GSP) for the export of proteins. In Aeromonas salmonicida, this protein is Type II secretion system protein C (exeC).